Reading from the N-terminus, the 201-residue chain is MALHDENVVWHSHPVTVQQRELHHGHRGVVLWFTGLSGSGKSTVAGALEEALHKLGVSTYLLDGDNVRHGLCSDLGFSDADRKENIRRVGEVANLMVEAGLVVLTAFISPHRAERQMVRERVGEGRFIEVFVDTPLAICEARDPKGLYKKARAGELRYFTGIDSVYEAPESAEIHLNGEQLVTNLVQQLLDLLRQNDIIRS.

35 to 42 (GLSGSGKS) is an ATP binding site. S109 acts as the Phosphoserine intermediate in catalysis.

It belongs to the APS kinase family.

It catalyses the reaction adenosine 5'-phosphosulfate + ATP = 3'-phosphoadenylyl sulfate + ADP + H(+). It participates in sulfur metabolism; hydrogen sulfide biosynthesis; sulfite from sulfate: step 2/3. Its function is as follows. Catalyzes the synthesis of activated sulfate. This chain is Adenylyl-sulfate kinase, found in Escherichia coli (strain ATCC 8739 / DSM 1576 / NBRC 3972 / NCIMB 8545 / WDCM 00012 / Crooks).